A 214-amino-acid chain; its full sequence is Probable GTP-binding protein EngB (214 aa).

One can recognise an EngB-type G domain in the interval 22–194; it reads HLPEIAFAGR…WARIDALLEP (173 aa). GTP-binding positions include 30–37, 57–61, 75–78, 142–145, and 173–175; these read GRSNVGKS, GRTQL, DLPG, TKCD, and FSA. Serine 37 and threonine 59 together coordinate Mg(2+). A disordered region spans residues 195-214; the sequence is TAAETPGIPEEPAPPGPVND. Residues 203–214 are compositionally biased toward pro residues; that stretch reads PEEPAPPGPVND.

This sequence belongs to the TRAFAC class TrmE-Era-EngA-EngB-Septin-like GTPase superfamily. EngB GTPase family. Mg(2+) is required as a cofactor.

Functionally, necessary for normal cell division and for the maintenance of normal septation. In Geobacter sp. (strain M21), this protein is Probable GTP-binding protein EngB.